The primary structure comprises 214 residues: uncharacterized protein (214 aa).

Residues 1–194 (MVSANREMAV…MHYSEYLSYV (194 aa)) enclose the AMMECR1 domain.

This is an uncharacterized protein from Arabidopsis thaliana (Mouse-ear cress).